Consider the following 2287-residue polypeptide: Serine/threonine-protein kinase MEC1 (2287 aa).

The 555-residue stretch at 1310 to 1864 folds into the FAT domain; sequence TLAKKSLETD…LWYISILLNS (555 aa). The PI3K/PI4K catalytic domain maps to 1968–2271; sequence FSSQYMVFNS…QVEALTQESC (304 aa). The G-loop stretch occupies residues 1974-1980; sequence VFNSLKK. A catalytic loop region spans residues 2140-2148; that stretch reads GLGDRHCEN. Residues 2160–2184 are activation loop; that stretch reads HVDFDCLFEKGKKLPVPEIVPFRLT. In terms of domain architecture, FATC spans 2255 to 2287; sequence LALSVSGQVEALTQESCSVENLSKMYIGWLPFW.

Belongs to the PI3/PI4-kinase family. ATM subfamily.

Its subcellular location is the nucleus. The catalysed reaction is L-seryl-[protein] + ATP = O-phospho-L-seryl-[protein] + ADP + H(+). It carries out the reaction L-threonyl-[protein] + ATP = O-phospho-L-threonyl-[protein] + ADP + H(+). In terms of biological role, serine/threonine protein kinase which activates checkpoint signaling upon genotoxic stresses such as ionizing radiation (IR), ultraviolet light (UV), or DNA replication stalling, thereby acting as a DNA damage sensor. Recognizes the substrate consensus sequence [ST]-Q. Recruited to DNA lesions in order to initiate the DNA repair by homologous recombination. Phosphorylates histone H2A to form H2AS128ph (gamma-H2A) at sites of DNA damage, also involved in the regulation of DNA damage response mechanism. Required for cell growth and meiotic recombination. The protein is Serine/threonine-protein kinase MEC1 (MEC1) of Kluyveromyces lactis (strain ATCC 8585 / CBS 2359 / DSM 70799 / NBRC 1267 / NRRL Y-1140 / WM37) (Yeast).